The chain runs to 466 residues: Putative transcription factor bHLH041 (466 aa).

Disordered regions lie at residues 108–129 (PANSDYLRPPHYPSSSSSSLSP), 194–213 (LTGPSSPPSTSSSPQRKGRA), and 260–289 (RENATTHGEGSGGSGGGGRYTSGPSATQLQ). Residues 120 to 129 (PSSSSSSLSP) show a composition bias toward low complexity. Positions 268–279 (EGSGGSGGGGRY) are enriched in gly residues. Residues 285–334 (ATQLQHMISERKRREKLNESFQALRSLLPPGTKKDKASVLSIAREQLSSL) enclose the bHLH domain.

In terms of assembly, homodimer.

The protein resides in the nucleus. The chain is Putative transcription factor bHLH041 (BHLH41) from Arabidopsis thaliana (Mouse-ear cress).